A 242-amino-acid chain; its full sequence is tRNA uridine(34) hydroxylase (242 aa).

The 95-residue stretch at 128-222 folds into the Rhodanese domain; it reads DGREVVMLDT…YFEETGGPGY (95 aa). Residue cysteine 182 is the Cysteine persulfide intermediate of the active site.

The protein belongs to the TrhO family.

It catalyses the reaction uridine(34) in tRNA + AH2 + O2 = 5-hydroxyuridine(34) in tRNA + A + H2O. Catalyzes oxygen-dependent 5-hydroxyuridine (ho5U) modification at position 34 in tRNAs. This chain is tRNA uridine(34) hydroxylase, found in Bordetella avium (strain 197N).